The sequence spans 488 residues: Protein nucleotidyltransferase YdiU (488 aa).

ATP-binding residues include Gly91, Gly93, Arg94, Lys114, Asp126, Gly127, Arg177, and Arg184. Residue Asp253 is the Proton acceptor of the active site. Mg(2+)-binding residues include Asn254 and Asp263. An ATP-binding site is contributed by Asp263.

This sequence belongs to the SELO family. Requires Mg(2+) as cofactor. It depends on Mn(2+) as a cofactor.

The catalysed reaction is L-seryl-[protein] + ATP = 3-O-(5'-adenylyl)-L-seryl-[protein] + diphosphate. It catalyses the reaction L-threonyl-[protein] + ATP = 3-O-(5'-adenylyl)-L-threonyl-[protein] + diphosphate. The enzyme catalyses L-tyrosyl-[protein] + ATP = O-(5'-adenylyl)-L-tyrosyl-[protein] + diphosphate. It carries out the reaction L-histidyl-[protein] + UTP = N(tele)-(5'-uridylyl)-L-histidyl-[protein] + diphosphate. The catalysed reaction is L-seryl-[protein] + UTP = O-(5'-uridylyl)-L-seryl-[protein] + diphosphate. It catalyses the reaction L-tyrosyl-[protein] + UTP = O-(5'-uridylyl)-L-tyrosyl-[protein] + diphosphate. In terms of biological role, nucleotidyltransferase involved in the post-translational modification of proteins. It can catalyze the addition of adenosine monophosphate (AMP) or uridine monophosphate (UMP) to a protein, resulting in modifications known as AMPylation and UMPylation. The sequence is that of Protein nucleotidyltransferase YdiU from Bacillus mycoides (strain KBAB4) (Bacillus weihenstephanensis).